The following is a 165-amino-acid chain: MICSKVPVRAWFATLGLGCLGLVAVGMALQTLLHLAPCPLCIFQRLLYIMIGFVGLLGFVLPAGRLLWSTLAAGLGVLGFGVAAYQTWMQAFPDLAPECGFTDPNAIERLVDWLGMEWPSMFLATGFCTSRDWELLGLSMANWSVLIFAGIVAYAVLLFVRKDRA.

Topologically, residues 1-11 are cytoplasmic; sequence MICSKVPVRAW. The chain crosses the membrane as a helical span at residues 12 to 28; the sequence is FATLGLGCLGLVAVGMA. Over 29 to 46 the chain is Periplasmic; sequence LQTLLHLAPCPLCIFQRL. C38 and C41 are disulfide-bonded. A helical membrane pass occupies residues 47–61; that stretch reads LYIMIGFVGLLGFVL. Residues 62–66 are Cytoplasmic-facing; sequence PAGRL. A helical membrane pass occupies residues 67-84; sequence LWSTLAAGLGVLGFGVAA. At 85–142 the chain is on the periplasmic side; the sequence is YQTWMQAFPDLAPECGFTDPNAIERLVDWLGMEWPSMFLATGFCTSRDWELLGLSMAN. A disulfide bridge connects residues C99 and C128. The chain crosses the membrane as a helical span at residues 143-161; sequence WSVLIFAGIVAYAVLLFVR. Residues 162 to 165 are Cytoplasmic-facing; it reads KDRA.

This sequence belongs to the DsbB family.

The protein localises to the cell inner membrane. Required for disulfide bond formation in some periplasmic proteins. Acts by oxidizing the DsbA protein. This Dechloromonas aromatica (strain RCB) protein is Disulfide bond formation protein B.